The primary structure comprises 80 residues: Raniseptin-2 (80 aa).

An N-terminal signal peptide occupies residues M1–C22. Positions E23–E49 are excised as a propeptide. Residues R27–E46 form a disordered region. Positions E30 to E44 are enriched in acidic residues.

The protein belongs to the frog skin active peptide (FSAP) family. Dermaseptin subfamily. In terms of tissue distribution, expressed by the skin glands.

The protein resides in the secreted. Its function is as follows. Has antibacterial activity. This Boana raniceps (Chaco tree frog) protein is Raniseptin-2.